We begin with the raw amino-acid sequence, 219 residues long: 2-phospho-L-lactate guanylyltransferase (219 aa).

The protein belongs to the CofC family. In terms of assembly, homodimer.

It catalyses the reaction (2S)-2-phospholactate + GTP + H(+) = (2S)-lactyl-2-diphospho-5'-guanosine + diphosphate. Its pathway is cofactor biosynthesis; coenzyme F420 biosynthesis. Its function is as follows. Guanylyltransferase that catalyzes the activation of (2S)-2-phospholactate (2-PL) as (2S)-lactyl-2-diphospho-5'-guanosine, via the condensation of 2-PL with GTP. It is involved in the biosynthesis of coenzyme F420, a hydride carrier cofactor. The sequence is that of 2-phospho-L-lactate guanylyltransferase from Methanocaldococcus vulcanius (strain ATCC 700851 / DSM 12094 / M7) (Methanococcus vulcanius).